The sequence spans 430 residues: Serine hydroxymethyltransferase (430 aa).

120–122 (GHI) serves as a coordination point for (6S)-5,6,7,8-tetrahydrofolate. Lys-226 is subject to N6-(pyridoxal phosphate)lysine.

This sequence belongs to the SHMT family. In terms of assembly, homodimer. Pyridoxal 5'-phosphate serves as cofactor.

It localises to the cytoplasm. Its pathway is amino-acid biosynthesis; glycine biosynthesis; glycine from L-serine: step 1/1. Functionally, catalyzes the reversible interconversion of serine and glycine with a modified folate serving as the one-carbon carrier. Also exhibits a pteridine-independent aldolase activity toward beta-hydroxyamino acids, producing glycine and aldehydes, via a retro-aldol mechanism. The chain is Serine hydroxymethyltransferase from Pyrobaculum islandicum (strain DSM 4184 / JCM 9189 / GEO3).